Here is a 166-residue protein sequence, read N- to C-terminus: Transcription antitermination protein NusB (166 aa).

Basic and acidic residues predominate over residues 1-18; sequence MISDESDRFNPRDPKPAD. The segment at 1 to 28 is disordered; the sequence is MISDESDRFNPRDPKPADAGKPSKSAKR.

It belongs to the NusB family.

Involved in transcription antitermination. Required for transcription of ribosomal RNA (rRNA) genes. Binds specifically to the boxA antiterminator sequence of the ribosomal RNA (rrn) operons. The protein is Transcription antitermination protein NusB of Pseudomonas putida (strain W619).